A 221-amino-acid polypeptide reads, in one-letter code: UPF0758 protein YicR (221 aa).

The 123-residue stretch at 99-221 (ALLSPEMTLE…YVSFAERGWI (123 aa)) folds into the MPN domain. The Zn(2+) site is built by H170, H172, and D183. A JAMM motif motif is present at residues 170–183 (HNHPSGCAEPSKAD).

Belongs to the UPF0758 family. YicR subfamily.

In Salmonella arizonae (strain ATCC BAA-731 / CDC346-86 / RSK2980), this protein is UPF0758 protein YicR.